Consider the following 635-residue polypeptide: Threonine--tRNA ligase (635 aa).

In terms of domain architecture, TGS spans 1–61 (MIKITLKDGK…HKDSSLEILT (61 aa)). The tract at residues 242 to 532 (DHRKLGKELD…LIEQYAGAFP (291 aa)) is catalytic. 3 residues coordinate Zn(2+): Cys333, His384, and His509.

This sequence belongs to the class-II aminoacyl-tRNA synthetase family. Homodimer. The cofactor is Zn(2+).

The protein resides in the cytoplasm. The catalysed reaction is tRNA(Thr) + L-threonine + ATP = L-threonyl-tRNA(Thr) + AMP + diphosphate + H(+). Its function is as follows. Catalyzes the attachment of threonine to tRNA(Thr) in a two-step reaction: L-threonine is first activated by ATP to form Thr-AMP and then transferred to the acceptor end of tRNA(Thr). Also edits incorrectly charged L-seryl-tRNA(Thr). The chain is Threonine--tRNA ligase from Clostridium botulinum (strain Loch Maree / Type A3).